The primary structure comprises 55 residues: uncharacterized protein (55 aa).

The disordered stretch occupies residues 1–25 (MKNNDKKKEVQRKYREEIKKKKQKN). The helical transmembrane segment at 35–55 (TIIVVTIIVLFIFFTYTLQGF) threads the bilayer.

It localises to the membrane. This is an uncharacterized protein from Bacillus subtilis (strain 168).